Reading from the N-terminus, the 162-residue chain is Phosphopantetheine adenylyltransferase (162 aa).

Ser-9 lines the substrate pocket. ATP contacts are provided by residues 9-10 (SF) and His-17. Positions 41, 73, and 87 each coordinate substrate. ATP contacts are provided by residues 88-90 (GLR), Glu-98, and 122-128 (NQNISSS).

It belongs to the bacterial CoaD family. In terms of assembly, homohexamer. The cofactor is Mg(2+).

The protein resides in the cytoplasm. It carries out the reaction (R)-4'-phosphopantetheine + ATP + H(+) = 3'-dephospho-CoA + diphosphate. The protein operates within cofactor biosynthesis; coenzyme A biosynthesis; CoA from (R)-pantothenate: step 4/5. In terms of biological role, reversibly transfers an adenylyl group from ATP to 4'-phosphopantetheine, yielding dephospho-CoA (dPCoA) and pyrophosphate. This is Phosphopantetheine adenylyltransferase from Leuconostoc mesenteroides subsp. mesenteroides (strain ATCC 8293 / DSM 20343 / BCRC 11652 / CCM 1803 / JCM 6124 / NCDO 523 / NBRC 100496 / NCIMB 8023 / NCTC 12954 / NRRL B-1118 / 37Y).